Here is a 524-residue protein sequence, read N- to C-terminus: Rho guanine nucleotide exchange factor 3 (524 aa).

A disordered region spans residues 75–98 (SDSRPDLFSPRPWSRNTPAANTKR). A DH domain is found at 121–303 (IKRQEAIFEL…IQGIVAEINI (183 aa)). Positions 290–448 (AINIIQGIVA…QWLNCIRQAK (159 aa)) constitute a PH domain.

It is found in the cytoplasm. Its function is as follows. Acts as a guanine nucleotide exchange factor (GEF) for RhoA and RhoB GTPases. The protein is Rho guanine nucleotide exchange factor 3 (Arhgef3) of Gallus gallus (Chicken).